Reading from the N-terminus, the 252-residue chain is Type III pantothenate kinase (252 aa).

6–13 is an ATP binding site; that stretch reads DIGNTNIV. Residue 107 to 110 coordinates substrate; the sequence is GADL. The Proton acceptor role is filled by aspartate 109. K(+) is bound at residue aspartate 129. Threonine 132 is an ATP binding site. Threonine 184 contributes to the substrate binding site.

This sequence belongs to the type III pantothenate kinase family. In terms of assembly, homodimer. Requires NH4(+) as cofactor. K(+) serves as cofactor.

Its subcellular location is the cytoplasm. The catalysed reaction is (R)-pantothenate + ATP = (R)-4'-phosphopantothenate + ADP + H(+). Its pathway is cofactor biosynthesis; coenzyme A biosynthesis; CoA from (R)-pantothenate: step 1/5. Functionally, catalyzes the phosphorylation of pantothenate (Pan), the first step in CoA biosynthesis. This is Type III pantothenate kinase from Bifidobacterium animalis subsp. lactis (strain AD011).